The chain runs to 167 residues: Zymogen granule membrane protein 16 (167 aa).

The signal sequence occupies residues Met1–Ala16. The 136-residue stretch at Ser24 to Thr159 folds into the Jacalin-type lectin domain.

Belongs to the jacalin lectin family. In terms of tissue distribution, expressed in pancreas, colon, duodenum, and much less in stomach.

Its subcellular location is the secreted. The protein localises to the extracellular space. It is found in the extracellular matrix. The protein resides in the zymogen granule lumen. It localises to the golgi apparatus lumen. Functionally, may play a role in protein trafficking. May act as a linker molecule between the submembranous matrix on the luminal side of zymogen granule membrane (ZGM) and aggregated secretory proteins during granule formation in the TGN. This is Zymogen granule membrane protein 16 (Zg16) from Rattus norvegicus (Rat).